A 329-amino-acid polypeptide reads, in one-letter code: Src kinase-associated phosphoprotein 2 (329 aa).

The tract at residues 58-95 (YAEDSEEEEDWDSNEGGSLQSERTDKDEEACEGAQQAP) is disordered. Positions 61-70 (DSEEEEDWDS) are enriched in acidic residues. A PH domain is found at 104–207 (SVFKAGYLEK…WVKQIDFVLK (104 aa)). Residues 240-263 (EDMPSPPPKVEPVSKHPPPTPAVD) form a disordered region. The segment covering 243 to 260 (PSPPPKVEPVSKHPPPTP) has biased composition (pro residues). The SH3 domain occupies 267–328 (DYANYYQGLW…PKDYLMELYA (62 aa)).

This sequence belongs to the SKAP family. In terms of processing, phosphorylated on tyrosines.

The protein localises to the cytoplasm. Functionally, may be involved in B-cell and macrophage adhesion processes. May play a role in src signaling pathway. This chain is Src kinase-associated phosphoprotein 2 (skap2), found in Takifugu rubripes (Japanese pufferfish).